Reading from the N-terminus, the 245-residue chain is tRNA pseudouridine synthase A (245 aa).

The active-site Nucleophile is Asp52. Substrate is bound at residue Tyr111.

Belongs to the tRNA pseudouridine synthase TruA family. Homodimer.

The enzyme catalyses uridine(38/39/40) in tRNA = pseudouridine(38/39/40) in tRNA. Functionally, formation of pseudouridine at positions 38, 39 and 40 in the anticodon stem and loop of transfer RNAs. This is tRNA pseudouridine synthase A from Ehrlichia chaffeensis (strain ATCC CRL-10679 / Arkansas).